A 547-amino-acid polypeptide reads, in one-letter code: Chaperonin GroEL (547 aa).

ATP contacts are provided by residues 30–33 (TLGP), K51, 87–91 (DGTTT), G415, and D496.

The protein belongs to the chaperonin (HSP60) family. In terms of assembly, forms a cylinder of 14 subunits composed of two heptameric rings stacked back-to-back. Interacts with the co-chaperonin GroES.

It is found in the cytoplasm. The catalysed reaction is ATP + H2O + a folded polypeptide = ADP + phosphate + an unfolded polypeptide.. Functionally, together with its co-chaperonin GroES, plays an essential role in assisting protein folding. The GroEL-GroES system forms a nano-cage that allows encapsulation of the non-native substrate proteins and provides a physical environment optimized to promote and accelerate protein folding. The protein is Chaperonin GroEL of Histophilus somni (strain 129Pt) (Haemophilus somnus).